The chain runs to 485 residues: Sulfate adenylyltransferase subunit 1 (485 aa).

The 216-residue stretch at 17–232 (KDLLRLLTAG…LETVHIDNDH (216 aa)) folds into the tr-type G domain. Residues 26–33 (GSVDDGKS) form a G1 region. 26-33 (GSVDDGKS) provides a ligand contact to GTP. The interval 84–88 (GITID) is G2. A G3 region spans residues 105–108 (DTPG). Residues 105–109 (DTPGH) and 160–163 (NKMD) contribute to the GTP site. The segment at 160–163 (NKMD) is G4. The G5 stretch occupies residues 197 to 199 (SAL).

This sequence belongs to the TRAFAC class translation factor GTPase superfamily. Classic translation factor GTPase family. CysN/NodQ subfamily. As to quaternary structure, heterodimer composed of CysD, the smaller subunit, and CysN.

The enzyme catalyses sulfate + ATP + H(+) = adenosine 5'-phosphosulfate + diphosphate. It participates in sulfur metabolism; hydrogen sulfide biosynthesis; sulfite from sulfate: step 1/3. In terms of biological role, with CysD forms the ATP sulfurylase (ATPS) that catalyzes the adenylation of sulfate producing adenosine 5'-phosphosulfate (APS) and diphosphate, the first enzymatic step in sulfur assimilation pathway. APS synthesis involves the formation of a high-energy phosphoric-sulfuric acid anhydride bond driven by GTP hydrolysis by CysN coupled to ATP hydrolysis by CysD. The sequence is that of Sulfate adenylyltransferase subunit 1 from Bacteroides thetaiotaomicron (strain ATCC 29148 / DSM 2079 / JCM 5827 / CCUG 10774 / NCTC 10582 / VPI-5482 / E50).